Consider the following 501-residue polypeptide: MAINAQEISALIKQQIENFKPNFDVTETGVVTYIGDGIARAHGLENVMSGELLNFENGSYGMAQNLESTDVGIIILGDFTDIREGDTIRRTGKIMEVPVGESLIGRVVDPLGRPVDGLGEIHTDKTRPVEAPAPGVMQRKSVSEPLQTGLKAIDALVPIGRGQRELIIGDRQTGKTTIAIDTILNQKDQDMICIYVAIGQKESTVRTQVETLRQYGALDYTIVVTASASQPSPLLFLAPYTGVAMAEEFMYQGKHVLIVYDDLSKQAVAYRELSLLLRRPPGREAFPGDVFYLHSRLLERSAKVSDELGGGSITALPFIETQAGDISAYIATNVISITDGQIFLGDGLFNAGIRPAIDAGSSVSRVGGSAQIKAMKKVAGTLRIDLASYRELEAFTKFGSDLDAATQAKLNRGRRTVEVLKQPVHKPLPVEKQVTILYALTHGFLDTVPVDDIVRFEEEFHTFFDAQHPEILETIRDTKDLPEEAVLDAAITEFLNQSSFQ.

An ATP-binding site is contributed by 169–176 (GDRQTGKT).

Belongs to the ATPase alpha/beta chains family. F-type ATPases have 2 components, CF(1) - the catalytic core - and CF(0) - the membrane proton channel. CF(1) has five subunits: alpha(3), beta(3), gamma(1), delta(1), epsilon(1). CF(0) has three main subunits: a(1), b(2) and c(9-12). The alpha and beta chains form an alternating ring which encloses part of the gamma chain. CF(1) is attached to CF(0) by a central stalk formed by the gamma and epsilon chains, while a peripheral stalk is formed by the delta and b chains.

It localises to the cell membrane. It catalyses the reaction ATP + H2O + 4 H(+)(in) = ADP + phosphate + 5 H(+)(out). Functionally, produces ATP from ADP in the presence of a proton gradient across the membrane. The alpha chain is a regulatory subunit. This chain is ATP synthase subunit alpha, found in Streptococcus pneumoniae serotype 19F (strain G54).